The primary structure comprises 425 residues: Peroxisomal membrane protein PEX14 (425 aa).

Disordered regions lie at residues Arg-49–Ala-89 and Asp-247–Ser-425. Positions Ser-56–Ala-76 are enriched in low complexity. An SH3-binding motif is present at residues Ala-89 to Trp-97. The span at Pro-256–Ser-297 shows a compositional bias: polar residues. Composition is skewed to basic and acidic residues over residues Asp-315–Thr-324 and Leu-333–Asp-366.

This sequence belongs to the peroxin-14 family. Interacts with PEX13 (via SH3 domain); forming the PEX13-PEX14 docking complex. Interacts with PEX5 (via WxxxF/Y motifs). Interacts with PEX20 (via WxxxF/Y motifs). Interacts with PEX3, PEX7, PEX8 and PEX17. Phosphorylated on serine or threonine residues.

It localises to the peroxisome membrane. In terms of biological role, component of the PEX13-PEX14 docking complex, a translocon channel that specifically mediates the import of peroxisomal cargo proteins bound to PEX5 or PEX20 receptors. The PEX13-PEX14 docking complex forms a large import pore which can be opened to a diameter of about 9 nm. Mechanistically, PEX5 (or PEX20) receptor along with cargo proteins associates with the PEX14 subunit of the PEX13-PEX14 docking complex in the cytosol, leading to the insertion of the receptor into the organelle membrane with the concomitant translocation of the cargo into the peroxisome matrix. The polypeptide is Peroxisomal membrane protein PEX14 (Komagataella pastoris (Yeast)).